A 107-amino-acid chain; its full sequence is uncharacterized protein (107 aa).

A run of 2 helical transmembrane segments spans residues 5–25 (WTII…VINV) and 42–62 (ILVI…VGIF). Positions 82–92 (IHKQEDTHLAD) are enriched in basic and acidic residues. A disordered region spans residues 82-107 (IHKQEDTHLADQTDTQDASAMIEKKD).

The protein resides in the cell membrane. This is an uncharacterized protein from Bacillus subtilis (strain 168).